We begin with the raw amino-acid sequence, 1040 residues long: Multidrug resistance protein MdtB (1040 aa).

12 helical membrane-spanning segments follow: residues Phe-16–Ile-36, Leu-347–Ala-367, Ile-369–Leu-389, Leu-396–Ile-416, Ile-440–Phe-460, Phe-472–Pro-492, Trp-537–Ile-557, Leu-863–Ile-883, Phe-888–Ala-908, Ile-911–Val-931, Ile-968–Val-988, and Ile-998–Ile-1018.

Belongs to the resistance-nodulation-cell division (RND) (TC 2.A.6) family. MdtB subfamily. In terms of assembly, part of a tripartite efflux system composed of MdtA, MdtB and MdtC. MdtB forms a heteromultimer with MdtC.

The protein resides in the cell inner membrane. Functionally, the MdtABC tripartite complex confers resistance against novobiocin and deoxycholate. This chain is Multidrug resistance protein MdtB, found in Escherichia coli (strain K12 / MC4100 / BW2952).